The primary structure comprises 405 residues: Argininosuccinate synthase (405 aa).

ATP-binding positions include 10–18 (AYSGGLDTS) and Ala-37. 2 residues coordinate L-citrulline: Tyr-88 and Ser-93. Gly-118 provides a ligand contact to ATP. Residues Thr-120, Asn-124, and Asp-125 each contribute to the L-aspartate site. Residue Asn-124 coordinates L-citrulline. The L-citrulline site is built by Arg-128, Ser-179, Ser-188, Glu-264, and Tyr-276.

It belongs to the argininosuccinate synthase family. Type 1 subfamily. In terms of assembly, homotetramer.

Its subcellular location is the cytoplasm. It catalyses the reaction L-citrulline + L-aspartate + ATP = 2-(N(omega)-L-arginino)succinate + AMP + diphosphate + H(+). The protein operates within amino-acid biosynthesis; L-arginine biosynthesis; L-arginine from L-ornithine and carbamoyl phosphate: step 2/3. The protein is Argininosuccinate synthase of Pseudomonas fluorescens (strain Pf0-1).